The sequence spans 102 residues: RNA-binding protein Hfq (102 aa).

The Sm domain occupies 9-68 (DPFLNALRRERVPVSIYLVNGIKLQGQIESFDQFVILLKNTVSQMVYKHAISTVVPSRPV). The segment at 63 to 102 (VPSRPVSHHSNNASGGTSSNYHHGSSAQNTSAQQDSEETE) is disordered. Over residues 70–96 (HHSNNASGGTSSNYHHGSSAQNTSAQQ) the composition is skewed to polar residues.

It belongs to the Hfq family. In terms of assembly, homohexamer.

RNA chaperone that binds small regulatory RNA (sRNAs) and mRNAs to facilitate mRNA translational regulation in response to envelope stress, environmental stress and changes in metabolite concentrations. Also binds with high specificity to tRNAs. The protein is RNA-binding protein Hfq of Shigella boydii serotype 18 (strain CDC 3083-94 / BS512).